The primary structure comprises 377 residues: Proteinase-activated receptor 3 (377 aa).

Residues 1-19 (MRAAIFAAIGALLLSPASC) form the signal peptide. Residues 20 to 38 (QSGMEYDADNLAKPTLSIK) constitute a propeptide, removed for receptor activation. Topologically, residues 39–94 (TFRGAPQNSFEEFPLSAIEGWTGTTKTVKIKCPEELDSNLHVNNATMGYLSSPLST) are extracellular. N-linked (GlcNAc...) asparagine glycosylation is present at Asn82. The chain crosses the membrane as a helical span at residues 95-120 (KLIPAIYILVFAVGMPANAVTLWMLF). Residues 121–127 (RTRTIRM) lie on the Cytoplasmic side of the membrane. A helical transmembrane segment spans residues 128-147 (TIFYTNLAIADFLFCVTLPF). Residues 148–166 (RIAYHLNGNNWVFGEVMCR) are Extracellular-facing. The cysteines at positions 165 and 244 are disulfide-linked. Residues 167 to 188 (ATTVIFYGNMYCSILLLACISI) traverse the membrane as a helical segment. Residues 189 to 205 (NRYLAIVHPFTYRGLPK) are Cytoplasmic-facing. The helical transmembrane segment at 206 to 229 (RTYALLTCGLVWTTVFLYMLPFFI) threads the bilayer. Residues 230–259 (LKQEYYLVQQDITTCHDVHNTCESSSPFQL) are Extracellular-facing. The helical transmembrane segment at 260-279 (YYFISLAFFGFLIPFLVIIY) threads the bilayer. Topologically, residues 280–296 (CYTAIIWTLNAKDRRWL) are cytoplasmic. The helical transmembrane segment at 297–321 (WYIKASLLTFVIFTICFAPSNIILI) threads the bilayer. Residues 322–335 (IHHANYYYSNTDAL) are Extracellular-facing. Residues 336-360 (YFVYLIALCLGSLNSCLDPFLYFLM) form a helical membrane-spanning segment. Topologically, residues 361-377 (SKITDHSTAYLTMVKLS) are cytoplasmic.

This sequence belongs to the G-protein coupled receptor 1 family. As to quaternary structure, interacts with INSC/inscuteable and GPSM2. A proteolytic cleavage generates a new N-terminus that functions as a tethered ligand.

The protein localises to the cell membrane. Receptor for activated thrombin coupled to G proteins that stimulate phosphoinositide hydrolysis. The polypeptide is Proteinase-activated receptor 3 (F2RL2) (Bos taurus (Bovine)).